A 148-amino-acid polypeptide reads, in one-letter code: Large-conductance mechanosensitive channel (148 aa).

A run of 2 helical transmembrane segments spans residues 14-34 and 85-105; these read VVDM…INTL and GIFV…FLSV.

Belongs to the MscL family. Homopentamer.

The protein localises to the cell inner membrane. Functionally, channel that opens in response to stretch forces in the membrane lipid bilayer. May participate in the regulation of osmotic pressure changes within the cell. The sequence is that of Large-conductance mechanosensitive channel from Chlorobium phaeobacteroides (strain DSM 266 / SMG 266 / 2430).